The primary structure comprises 232 residues: C4-dicarboxylate TRAP transporter small permease protein DctQ (232 aa).

4 consecutive transmembrane segments (helical) span residues 30-50, 58-78, 103-123, and 167-187; these read EFLI…NVIM, ILWA…VGAS, LYAL…LIGS, and FIPY…FLQI.

The protein belongs to the TRAP transporter small permease family. In terms of assembly, the complex comprises the extracytoplasmic solute receptor protein DctP, and the two transmembrane proteins DctQ and DctM.

It is found in the cell inner membrane. Its function is as follows. Part of the tripartite ATP-independent periplasmic (TRAP) transport system DctPQM involved in C4-dicarboxylates uptake. The sequence is that of C4-dicarboxylate TRAP transporter small permease protein DctQ from Vibrio cholerae serotype O1 (strain ATCC 39315 / El Tor Inaba N16961).